A 347-amino-acid polypeptide reads, in one-letter code: Dolichyl-diphosphooligosaccharide--protein glycosyltransferase subunit TUSC3 (347 aa).

Residues 1 to 41 (MSARAAPSRRRQAGRRLRYLPTGSFPFLLLLLLLCIQLGGG) form the signal peptide. Residues 42-196 (QKKKENLLAE…DVHIRVFRPP (155 aa)) are Lumenal-facing. Residues 59-187 (WSSRRSIFRM…LAKWIADRTD (129 aa)) form the Thioredoxin domain. Residue N83 is glycosylated (N-linked (GlcNAc...) asparagine). C99 and C102 are disulfide-bonded. A helical transmembrane segment spans residues 197–217 (NYSGTIALALLVSLVGGLLYL). Over 218–221 (RRNN) the chain is Cytoplasmic. Residues 222–242 (LEFIYNKTGWAMVSLCIVFAM) form a helical membrane-spanning segment. Topologically, residues 243–276 (TSGQMWNHIRGPPYAHKNPHNGQVSYIHGSSQAQ) are lumenal. The chain crosses the membrane as a helical span at residues 277-297 (FVAESHIILVLNAAITMGMVL). The Cytoplasmic segment spans residues 298–312 (LNEAATSKGDVGKRR). Residues 313–333 (IICLVGLGLVVFFFSFLLSIF) traverse the membrane as a helical segment. The Lumenal portion of the chain corresponds to 334-347 (RSKYHGYPYSFLIK).

It belongs to the OST3/OST6 family. In terms of assembly, accessory component of the STT3B-containing form of the oligosaccharyltransferase (OST) complex. OST exists in two different complex forms which contain common core subunits RPN1, RPN2, OST48, OST4, DAD1 and TMEM258, either STT3A or STT3B as catalytic subunits, and form-specific accessory subunits. OST can form stable complexes with the Sec61 complex or with both the Sec61 and TRAP complexes. The association of TUSC3 or MAGT1 with the STT3B-containing complex seems to be mutually exclusvice.

Its subcellular location is the endoplasmic reticulum membrane. It functions in the pathway protein modification; protein glycosylation. In terms of biological role, acts as accessory component of the N-oligosaccharyl transferase (OST) complex which catalyzes the transfer of a high mannose oligosaccharide from a lipid-linked oligosaccharide donor to an asparagine residue within an Asn-X-Ser/Thr consensus motif in nascent polypeptide chains. Involved in N-glycosylation of STT3B-dependent substrates. Specifically required for the glycosylation of a subset of acceptor sites that are near cysteine residues; in this function seems to act redundantly with MAGT1. In its oxidized form proposed to form transient mixed disulfides with a glycoprotein substrate to facilitate access of STT3B to the unmodified acceptor site. Also has oxidoreductase-independent functions in the STT3B-containing OST complex possibly involving substrate recognition. Could indirectly play a role in Mg(2+) transport. The protein is Dolichyl-diphosphooligosaccharide--protein glycosyltransferase subunit TUSC3 (Tusc3) of Mus musculus (Mouse).